The chain runs to 207 residues: Large ribosomal subunit protein uL18 (207 aa).

This sequence belongs to the universal ribosomal protein uL18 family. Part of the 50S ribosomal subunit. Contacts the 5S and 23S rRNAs.

Functionally, this is one of the proteins that bind and probably mediate the attachment of the 5S RNA into the large ribosomal subunit, where it forms part of the central protuberance. This Caldivirga maquilingensis (strain ATCC 700844 / DSM 13496 / JCM 10307 / IC-167) protein is Large ribosomal subunit protein uL18.